The primary structure comprises 380 residues: Glutamyl-tRNA reductase 1 (380 aa).

Substrate-binding positions include 42-45, Ser-93, 98-100, and Gln-104; these read TCNR and ETD. Cys-43 acts as the Nucleophile in catalysis. 172–177 provides a ligand contact to NADP(+); sequence GAGAVG.

This sequence belongs to the glutamyl-tRNA reductase family. As to quaternary structure, homodimer.

It catalyses the reaction (S)-4-amino-5-oxopentanoate + tRNA(Glu) + NADP(+) = L-glutamyl-tRNA(Glu) + NADPH + H(+). The protein operates within porphyrin-containing compound metabolism; protoporphyrin-IX biosynthesis; 5-aminolevulinate from L-glutamyl-tRNA(Glu): step 1/2. In terms of biological role, catalyzes the NADPH-dependent reduction of glutamyl-tRNA(Glu) to glutamate 1-semialdehyde (GSA). The polypeptide is Glutamyl-tRNA reductase 1 (Pyrobaculum calidifontis (strain DSM 21063 / JCM 11548 / VA1)).